We begin with the raw amino-acid sequence, 353 residues long: Photosystem II D2 protein (353 aa).

Thr2 carries the post-translational modification N-acetylthreonine. The residue at position 2 (Thr2) is a Phosphothreonine. Residues 41 to 61 (CAYFALGGWFTGTTFVTSWYT) traverse the membrane as a helical segment. Residue His118 coordinates chlorophyll a. Residues 125–141 (GFMLRQFELARSVQLRP) form a helical membrane-spanning segment. Pheophytin a contacts are provided by Gln130 and Asn143. The helical transmembrane segment at 153–166 (VFVSVFLIYPLGQS) threads the bilayer. Chlorophyll a is bound at residue His198. The helical transmembrane segment at 208–228 (AALLCAIHGATVENTLFEDGD) threads the bilayer. A plastoquinone contacts are provided by His215 and Phe262. Residue His215 participates in Fe cation binding. His269 contributes to the Fe cation binding site. A helical membrane pass occupies residues 279 to 295 (GLWMSAIGVVGLALNLR).

It belongs to the reaction center PufL/M/PsbA/D family. PSII is composed of 1 copy each of membrane proteins PsbA, PsbB, PsbC, PsbD, PsbE, PsbF, PsbH, PsbI, PsbJ, PsbK, PsbL, PsbM, PsbT, PsbX, PsbY, PsbZ, Psb30/Ycf12, at least 3 peripheral proteins of the oxygen-evolving complex and a large number of cofactors. It forms dimeric complexes. The D1/D2 heterodimer binds P680, chlorophylls that are the primary electron donor of PSII, and subsequent electron acceptors. It shares a non-heme iron and each subunit binds pheophytin, quinone, additional chlorophylls, carotenoids and lipids. There is also a Cl(-1) ion associated with D1 and D2, which is required for oxygen evolution. The PSII complex binds additional chlorophylls, carotenoids and specific lipids. is required as a cofactor.

Its subcellular location is the plastid. The protein resides in the chloroplast thylakoid membrane. It catalyses the reaction 2 a plastoquinone + 4 hnu + 2 H2O = 2 a plastoquinol + O2. Photosystem II (PSII) is a light-driven water:plastoquinone oxidoreductase that uses light energy to abstract electrons from H(2)O, generating O(2) and a proton gradient subsequently used for ATP formation. It consists of a core antenna complex that captures photons, and an electron transfer chain that converts photonic excitation into a charge separation. The D1/D2 (PsbA/PsbD) reaction center heterodimer binds P680, the primary electron donor of PSII as well as several subsequent electron acceptors. D2 is needed for assembly of a stable PSII complex. This Lolium perenne (Perennial ryegrass) protein is Photosystem II D2 protein.